The sequence spans 143 residues: Large ribosomal subunit protein uL11 (143 aa).

It belongs to the universal ribosomal protein uL11 family. As to quaternary structure, part of the ribosomal stalk of the 50S ribosomal subunit. Interacts with L10 and the large rRNA to form the base of the stalk. L10 forms an elongated spine to which L12 dimers bind in a sequential fashion forming a multimeric L10(L12)X complex. Post-translationally, one or more lysine residues are methylated.

Its function is as follows. Forms part of the ribosomal stalk which helps the ribosome interact with GTP-bound translation factors. The chain is Large ribosomal subunit protein uL11 from Nitrosospira multiformis (strain ATCC 25196 / NCIMB 11849 / C 71).